The following is a 271-amino-acid chain: NADPH-dependent 7-cyano-7-deazaguanine reductase (271 aa).

81–83 (IES) lines the substrate pocket. Residue 83–84 (SK) participates in NADPH binding. Catalysis depends on C177, which acts as the Thioimide intermediate. D184 acts as the Proton donor in catalysis. 216–217 (HE) is a binding site for substrate. 245–246 (RG) contributes to the NADPH binding site.

It belongs to the GTP cyclohydrolase I family. QueF type 2 subfamily. As to quaternary structure, homodimer.

Its subcellular location is the cytoplasm. The catalysed reaction is 7-aminomethyl-7-carbaguanine + 2 NADP(+) = 7-cyano-7-deazaguanine + 2 NADPH + 3 H(+). Its pathway is tRNA modification; tRNA-queuosine biosynthesis. Catalyzes the NADPH-dependent reduction of 7-cyano-7-deazaguanine (preQ0) to 7-aminomethyl-7-deazaguanine (preQ1). This chain is NADPH-dependent 7-cyano-7-deazaguanine reductase, found in Xanthomonas oryzae pv. oryzae (strain MAFF 311018).